The primary structure comprises 255 residues: Probable histidinol-phosphatase (255 aa).

Belongs to the PHP hydrolase family. HisK subfamily.

It carries out the reaction L-histidinol phosphate + H2O = L-histidinol + phosphate. The protein operates within amino-acid biosynthesis; L-histidine biosynthesis; L-histidine from 5-phospho-alpha-D-ribose 1-diphosphate: step 8/9. The sequence is that of Probable histidinol-phosphatase (hisK) from Clostridium acetobutylicum (strain ATCC 824 / DSM 792 / JCM 1419 / IAM 19013 / LMG 5710 / NBRC 13948 / NRRL B-527 / VKM B-1787 / 2291 / W).